We begin with the raw amino-acid sequence, 95 residues long: Aspartyl/glutamyl-tRNA(Asn/Gln) amidotransferase subunit C (95 aa).

This sequence belongs to the GatC family. Heterotrimer of A, B and C subunits.

The catalysed reaction is L-glutamyl-tRNA(Gln) + L-glutamine + ATP + H2O = L-glutaminyl-tRNA(Gln) + L-glutamate + ADP + phosphate + H(+). It catalyses the reaction L-aspartyl-tRNA(Asn) + L-glutamine + ATP + H2O = L-asparaginyl-tRNA(Asn) + L-glutamate + ADP + phosphate + 2 H(+). Its function is as follows. Allows the formation of correctly charged Asn-tRNA(Asn) or Gln-tRNA(Gln) through the transamidation of misacylated Asp-tRNA(Asn) or Glu-tRNA(Gln) in organisms which lack either or both of asparaginyl-tRNA or glutaminyl-tRNA synthetases. The reaction takes place in the presence of glutamine and ATP through an activated phospho-Asp-tRNA(Asn) or phospho-Glu-tRNA(Gln). This Campylobacter lari (strain RM2100 / D67 / ATCC BAA-1060) protein is Aspartyl/glutamyl-tRNA(Asn/Gln) amidotransferase subunit C.